A 235-amino-acid polypeptide reads, in one-letter code: Putative N-acetylmannosamine-6-phosphate 2-epimerase (235 aa).

The protein belongs to the NanE family.

It carries out the reaction an N-acyl-D-glucosamine 6-phosphate = an N-acyl-D-mannosamine 6-phosphate. It functions in the pathway amino-sugar metabolism; N-acetylneuraminate degradation; D-fructose 6-phosphate from N-acetylneuraminate: step 3/5. Functionally, converts N-acetylmannosamine-6-phosphate (ManNAc-6-P) to N-acetylglucosamine-6-phosphate (GlcNAc-6-P). This chain is Putative N-acetylmannosamine-6-phosphate 2-epimerase, found in Enterobacter sp. (strain 638).